The following is a 444-amino-acid chain: Protein translocase subunit SecY (444 aa).

The next 10 membrane-spanning stretches (helical) occupy residues 24–44 (FFVI…IPGI), 77–97 (ILAL…LLTV), 123–143 (GTLV…PNMV), 153–173 (MFTL…MWLG), 181–201 (IGNG…PKAI), 215–235 (VLLL…VVFM), 269–289 (MAGV…GTLA), 318–338 (YVML…ALVF), 376–396 (LAGA…MVAW), and 400–420 (FYFG…FMAQ).

Belongs to the SecY/SEC61-alpha family. As to quaternary structure, component of the Sec protein translocase complex. Heterotrimer consisting of SecY, SecE and SecG subunits. The heterotrimers can form oligomers, although 1 heterotrimer is thought to be able to translocate proteins. Interacts with the ribosome. Interacts with SecDF, and other proteins may be involved. Interacts with SecA.

The protein localises to the cell inner membrane. In terms of biological role, the central subunit of the protein translocation channel SecYEG. Consists of two halves formed by TMs 1-5 and 6-10. These two domains form a lateral gate at the front which open onto the bilayer between TMs 2 and 7, and are clamped together by SecE at the back. The channel is closed by both a pore ring composed of hydrophobic SecY resides and a short helix (helix 2A) on the extracellular side of the membrane which forms a plug. The plug probably moves laterally to allow the channel to open. The ring and the pore may move independently. The sequence is that of Protein translocase subunit SecY from Vibrio cholerae serotype O1 (strain ATCC 39315 / El Tor Inaba N16961).